A 393-amino-acid chain; its full sequence is Phosphopentomutase (393 aa).

Positions 11, 282, 287, 323, 324, and 335 each coordinate Mn(2+).

It belongs to the phosphopentomutase family. Requires Mn(2+) as cofactor.

The protein localises to the cytoplasm. The catalysed reaction is 2-deoxy-alpha-D-ribose 1-phosphate = 2-deoxy-D-ribose 5-phosphate. It catalyses the reaction alpha-D-ribose 1-phosphate = D-ribose 5-phosphate. Its pathway is carbohydrate degradation; 2-deoxy-D-ribose 1-phosphate degradation; D-glyceraldehyde 3-phosphate and acetaldehyde from 2-deoxy-alpha-D-ribose 1-phosphate: step 1/2. Isomerase that catalyzes the conversion of deoxy-ribose 1-phosphate (dRib-1-P) and ribose 1-phosphate (Rib-1-P) to deoxy-ribose 5-phosphate (dRib-5-P) and ribose 5-phosphate (Rib-5-P), respectively. This Caldanaerobacter subterraneus subsp. tengcongensis (strain DSM 15242 / JCM 11007 / NBRC 100824 / MB4) (Thermoanaerobacter tengcongensis) protein is Phosphopentomutase.